Consider the following 271-residue polypeptide: 5-deoxy-glucuronate isomerase (271 aa).

It belongs to the isomerase IolB family.

The enzyme catalyses 5-deoxy-D-glucuronate = 5-dehydro-2-deoxy-D-gluconate. It functions in the pathway polyol metabolism; myo-inositol degradation into acetyl-CoA; acetyl-CoA from myo-inositol: step 4/7. Functionally, involved in the isomerization of 5-deoxy-glucuronate (5DG) to 5-dehydro-2-deoxy-D-gluconate (DKG or 2-deoxy-5-keto-D-gluconate). In Shouchella clausii (strain KSM-K16) (Alkalihalobacillus clausii), this protein is 5-deoxy-glucuronate isomerase.